The sequence spans 100 residues: Transcription and mRNA export factor SUS1 (100 aa).

It belongs to the ENY2 family. As to quaternary structure, component of the nuclear pore complex (NPC)-associated TREX-2 complex (transcription and export complex 2), composed of at least SUS1, SAC3, THP1, SEM1, and CDC31. TREX-2 contains 2 SUS1 chains. The TREX-2 complex interacts with the nucleoporin NUP1. Component of the 1.8 MDa SAGA transcription coactivator-HAT complex. SAGA is built of 5 distinct domains with specialized functions. Within the SAGA complex, SUS1, SGF11, SGF73 and UBP8 form an additional subcomplex of SAGA called the DUB module (deubiquitination module). Interacts directly with THP1, SAC3, SGF11, and with the RNA polymerase II.

The protein localises to the nucleus. It is found in the nucleoplasm. Its subcellular location is the cytoplasm. It localises to the P-body. Involved in mRNA export coupled transcription activation by association with both the TREX-2 and the SAGA complexes. At the promoters, SAGA is required for recruitment of the basal transcription machinery. It influences RNA polymerase II transcriptional activity through different activities such as TBP interaction and promoter selectivity, interaction with transcription activators, and chromatin modification through histone acetylation and deubiquitination. Within the SAGA complex, participates in a subcomplex required for deubiquitination of H2B and for the maintenance of steady-state H3 methylation levels. The TREX-2 complex functions in docking export-competent ribonucleoprotein particles (mRNPs) to the nuclear entrance of the nuclear pore complex (nuclear basket). TREX-2 participates in mRNA export and accurate chromatin positioning in the nucleus by tethering genes to the nuclear periphery. May also be involved in cytoplasmic mRNA decay by interaction with components of P-bodies. The sequence is that of Transcription and mRNA export factor SUS1 from Cryptococcus neoformans var. neoformans serotype D (strain B-3501A) (Filobasidiella neoformans).